A 926-amino-acid chain; its full sequence is Glycogenin (926 aa).

UDP-binding residues include Leu10, Thr12, Tyr16, and Arg85. UDP-alpha-D-glucose-binding residues include Leu10, Thr12, Tyr16, Arg85, Lys94, Asp111, Ala112, Asp113, Asn145, Ser146, Asp184, Asp187, and Gln188. 3 residues coordinate UDP: Asp111, Ala112, and Asp113. Asp111 is a binding site for Mn(2+). Asp113 contributes to the Mn(2+) binding site. An O-linked (Glc...) tyrosine glycan is attached at Tyr219. UDP-binding residues include His236, Gly239, and Lys242. His236 contributes to the Mn(2+) binding site. UDP-alpha-D-glucose-binding residues include Gly239 and Lys242. Disordered regions lie at residues 379–432 (PSVS…PEMS), 452–476 (YYAHPESHRPATEHKEPEYPTLPKE), 547–584 (SIQNPTPPHPAHSQHQSHATGMGMAGQAPKSPSPPPRH), 611–749 (MSGK…ETVQ), and 768–903 (LPHA…PNTD). Pro residues predominate over residues 386 to 402 (LTPPPADAAPAPAPAPV). Polar residues predominate over residues 404-413 (TQTEQKTAQP). Over residues 456–469 (PESHRPATEHKEPE) the composition is skewed to basic and acidic residues. Residues 557 to 566 (AHSQHQSHAT) show a composition bias toward low complexity. A compositionally biased stretch (polar residues) spans 655 to 683 (SLHSLQSVPGTPRTQYSTFGKSPRLTNAR). Over residues 692 to 704 (EQPEDSADGDDEN) the composition is skewed to acidic residues. Positions 733-745 (DRWAQTDRVKTVD) are enriched in basic and acidic residues. Over residues 788-798 (SGNGRAGGGGQ) the composition is skewed to gly residues. Positions 800–812 (EAQTQHQSTYYEY) are enriched in polar residues. 2 stretches are compositionally biased toward low complexity: residues 813 to 824 (QQQHPHSQQSRQ) and 851 to 875 (HAQGLAQAQAQAHGQPQGQGANPNL).

The protein belongs to the glycosyltransferase 8 family. Glycogenin subfamily. The cofactor is Mn(2+).

It localises to the cytoplasm. The protein resides in the vacuole. The catalysed reaction is L-tyrosyl-[glycogenin] + UDP-alpha-D-glucose = alpha-D-glucosyl-L-tyrosyl-[glycogenin] + UDP + H(+). It catalyses the reaction [1,4-alpha-D-glucosyl](n)-L-tyrosyl-[glycogenin] + UDP-alpha-D-glucose = [1,4-alpha-D-glucosyl](n+1)-L-tyrosyl-[glycogenin] + UDP + H(+). Self-glucosylating initiator of glycogen synthesis. It catalyzes the formation of a short alpha (1,4)-glucosyl chain covalently attached via a glucose 1-O-tyrosyl linkage to internal tyrosine residues and these chains act as primers for the elongation reaction catalyzed by glycogen synthase. The chain is Glycogenin from Cryptococcus neoformans var. grubii serotype A (strain H99 / ATCC 208821 / CBS 10515 / FGSC 9487) (Filobasidiella neoformans var. grubii).